A 72-amino-acid polypeptide reads, in one-letter code: uncharacterized protein (72 aa).

This is an uncharacterized protein from Schizosaccharomyces pombe (strain 972 / ATCC 24843) (Fission yeast).